The primary structure comprises 368 residues: MHESLDKRLEGLLTGLALAGRSLDLEGKRQELSILEEQTLKEDFWQDVTSAGKVSERIVSLKRQIAHYEEFKVRVENLAFFLNDGDVSADPELREDLEKEFTICEHILSEWETQRLLSGEVDKNPCFLTINAGAGGTESCDWVEMLFRMYCRWAAQHQWKVEVIDRQEGDVAGIKHVTVKFSGDYAYGYAKAERGVHRLVRISPFDSNAKRHTSFASVDVYPEIDDEIEIDIRPNDLRIDTFRSSGAGGQHVNVTDSAVRITHIPTGIMVSCQRERSQIQNRESCMKMLRARMYQQILQERLEKQLLDRKNKKEIAWGSQIRNYVFQPYTLVKDVRTGHETGNVQAMMDGELLDDFVKAYLAEYGEIS.

An N5-methylglutamine modification is found at glutamine 250.

The protein belongs to the prokaryotic/mitochondrial release factor family. In terms of processing, methylated by PrmC. Methylation increases the termination efficiency of RF2.

It localises to the cytoplasm. Peptide chain release factor 2 directs the termination of translation in response to the peptide chain termination codons UGA and UAA. The polypeptide is Peptide chain release factor 2 (Chlamydia abortus (strain DSM 27085 / S26/3) (Chlamydophila abortus)).